The following is a 629-amino-acid chain: tRNA uridine 5-carboxymethylaminomethyl modification enzyme MnmG (629 aa).

FAD-binding positions include 13–18 (GGGHAG), valine 125, and serine 180. NAD(+) is bound at residue 273–287 (GPRYCPSIEDKVMRF). Glutamine 370 lines the FAD pocket.

It belongs to the MnmG family. As to quaternary structure, homodimer. Heterotetramer of two MnmE and two MnmG subunits. The cofactor is FAD.

The protein resides in the cytoplasm. NAD-binding protein involved in the addition of a carboxymethylaminomethyl (cmnm) group at the wobble position (U34) of certain tRNAs, forming tRNA-cmnm(5)s(2)U34. The polypeptide is tRNA uridine 5-carboxymethylaminomethyl modification enzyme MnmG (Pasteurella multocida (strain Pm70)).